The primary structure comprises 35 residues: Jingzhaotoxin F6-27.63 (35 aa).

3 disulfides stabilise this stretch: C2-C17, C9-C22, and C16-C29.

This sequence belongs to the neurotoxin 10 (Hwtx-1) family. 49 (Jztx-F6) subfamily. Expressed by the venom gland.

The protein localises to the secreted. Its function is as follows. Probable ion channel inhibitor. This chain is Jingzhaotoxin F6-27.63, found in Chilobrachys guangxiensis (Chinese earth tiger tarantula).